Here is a 681-residue protein sequence, read N- to C-terminus: DNA ligase (681 aa).

NAD(+)-binding positions include 45–49, 94–95, and Glu-120; these read DFDFD and SL. Lys-122 functions as the N6-AMP-lysine intermediate in the catalytic mechanism. Residues Arg-143, Glu-177, Lys-289, and Lys-313 each contribute to the NAD(+) site. 4 residues coordinate Zn(2+): Cys-403, Cys-406, Cys-421, and Cys-426. In terms of domain architecture, BRCT spans 593–681; that stretch reads SDQQPFAGQS…SLKINFKNTI (89 aa).

It belongs to the NAD-dependent DNA ligase family. LigA subfamily. Mg(2+) is required as a cofactor. It depends on Mn(2+) as a cofactor.

The enzyme catalyses NAD(+) + (deoxyribonucleotide)n-3'-hydroxyl + 5'-phospho-(deoxyribonucleotide)m = (deoxyribonucleotide)n+m + AMP + beta-nicotinamide D-nucleotide.. In terms of biological role, DNA ligase that catalyzes the formation of phosphodiester linkages between 5'-phosphoryl and 3'-hydroxyl groups in double-stranded DNA using NAD as a coenzyme and as the energy source for the reaction. It is essential for DNA replication and repair of damaged DNA. In Leptospira borgpetersenii serovar Hardjo-bovis (strain L550), this protein is DNA ligase.